We begin with the raw amino-acid sequence, 231 residues long: Flagellar L-ring protein (231 aa).

An N-terminal signal peptide occupies residues 1 to 20 (MTYRRIPLYLSCLFLLALSG). Cys-21 is lipidated: N-palmitoyl cysteine. Cys-21 is lipidated: S-diacylglycerol cysteine.

The protein belongs to the FlgH family. As to quaternary structure, the basal body constitutes a major portion of the flagellar organelle and consists of four rings (L,P,S, and M) mounted on a central rod.

The protein localises to the cell outer membrane. It localises to the bacterial flagellum basal body. Its function is as follows. Assembles around the rod to form the L-ring and probably protects the motor/basal body from shearing forces during rotation. This Desulfotalea psychrophila (strain LSv54 / DSM 12343) protein is Flagellar L-ring protein.